Consider the following 160-residue polypeptide: Cytochrome b6-f complex subunit 4 (160 aa).

A run of 3 helical transmembrane segments spans residues 36–56 (LLYM…SLAV), 95–115 (LLGV…PFIE), and 131–151 (TLFL…ALPI).

Belongs to the cytochrome b family. PetD subfamily. The 4 large subunits of the cytochrome b6-f complex are cytochrome b6, subunit IV (17 kDa polypeptide, petD), cytochrome f and the Rieske protein, while the 4 small subunits are petG, petL, petM and petN. The complex functions as a dimer.

The protein resides in the plastid. The protein localises to the chloroplast thylakoid membrane. In terms of biological role, component of the cytochrome b6-f complex, which mediates electron transfer between photosystem II (PSII) and photosystem I (PSI), cyclic electron flow around PSI, and state transitions. This chain is Cytochrome b6-f complex subunit 4, found in Oltmannsiellopsis viridis (Marine flagellate).